Here is a 226-residue protein sequence, read N- to C-terminus: MEANASVDMFSKVLENQLLQTTKLVEEHLDSEIQKLDQMDEDELERLKEKRLEALKKAQQQKQEWLSKGHGEYREIPSERDFFQEDKESKKVVCHFYRDSTFRCKILDRHLVILSKKHLETKFLKLNVEKAPFLCERLRIKVIPTLALVKDGKTQDFVVGFSDLGNTDDFTTETLEWRLGCSDILNYSGNLMEPPFQSQKKFGTNFTKLEKKTIRGKKYDSDSDDD.

Positions 52–180 (LEALKKAQQQ…TTETLEWRLG (129 aa)) constitute a Thioredoxin domain. 3 positions are modified to phosphoserine: Ser188, Ser221, and Ser223.

As to quaternary structure, forms ternary complexes with the chaperonin TCP1 complex, spanning the cylindrical chaperonin cavity and contacting at least 2 subunits.

The protein localises to the cytoplasm. It localises to the nucleus. Its subcellular location is the cytoskeleton. The protein resides in the microtubule organizing center. It is found in the centrosome. The protein localises to the midbody. Significantly diminishes the chaperonin TCP1 complex ATPase activity, thus negatively impacts protein folding, including that of actin or tubulin. The sequence is that of Thioredoxin domain-containing protein 9 (TXNDC9) from Bos taurus (Bovine).